The chain runs to 156 residues: Large ribosomal subunit protein uL15 (156 aa).

Residues M1–G11 show a composition bias toward basic and acidic residues. The segment at M1–V44 is disordered. The span at R21–V35 shows a compositional bias: gly residues.

The protein belongs to the universal ribosomal protein uL15 family. Part of the 50S ribosomal subunit.

Binds to the 23S rRNA. The chain is Large ribosomal subunit protein uL15 from Brucella abortus (strain S19).